The sequence spans 57 residues: UPF0391 membrane protein Patl_0263 (57 aa).

2 consecutive transmembrane segments (helical) span residues F8 to A28 and I30 to F50.

The protein belongs to the UPF0391 family.

It is found in the cell membrane. This chain is UPF0391 membrane protein Patl_0263, found in Pseudoalteromonas atlantica (strain T6c / ATCC BAA-1087).